The primary structure comprises 489 residues: Cytochrome P450 2C70 (489 aa).

The signal sequence occupies residues 1–27; the sequence is MALFIFLGIWLSCFLFLFLWNQHRGRG. Cysteine 434 lines the heme pocket.

The protein belongs to the cytochrome P450 family. The cofactor is heme. As to expression, expressed in liver.

Its subcellular location is the endoplasmic reticulum membrane. The protein resides in the microsome membrane. It catalyses the reaction chenodeoxycholate + reduced [NADPH--hemoprotein reductase] + O2 = alpha-muricholate + oxidized [NADPH--hemoprotein reductase] + H2O + H(+). The enzyme catalyses ursodeoxycholate + reduced [NADPH--hemoprotein reductase] + O2 = beta-muricholate + oxidized [NADPH--hemoprotein reductase] + H2O + H(+). Its function is as follows. A cytochrome P450 monooxygenase involved in muricholic acid (MCA) synthesis. Hydroxylates at the 6-beta position two major bile acids, chenodeoxycholic acid (CDCA) and ursodeoxycholic acid (UDCA) to form alpha-MCA and beta-MCA, respectively. May regulate NR1H4/farnesoid X receptor signaling, as taurine-conjugated MCAs are antagonists of NR1H4. Mechanistically, uses molecular oxygen inserting one oxygen atom into a substrate, and reducing the second into a water molecule, with two electrons provided by NADPH via cytochrome P450 reductase (CPR; NADPH-ferrihemoprotein reductase). The polypeptide is Cytochrome P450 2C70 (Mus musculus (Mouse)).